A 238-amino-acid polypeptide reads, in one-letter code: Orotidine 5'-phosphate decarboxylase (238 aa).

Substrate contacts are provided by residues D18, K40, 67 to 76, T122, R183, Q192, and R213; that span reads DMKLLDIDNT. The Proton donor role is filled by K69.

This sequence belongs to the OMP decarboxylase family. Type 1 subfamily. As to quaternary structure, homodimer.

It catalyses the reaction orotidine 5'-phosphate + H(+) = UMP + CO2. It participates in pyrimidine metabolism; UMP biosynthesis via de novo pathway; UMP from orotate: step 2/2. In terms of biological role, catalyzes the decarboxylation of orotidine 5'-monophosphate (OMP) to uridine 5'-monophosphate (UMP). The protein is Orotidine 5'-phosphate decarboxylase of Brucella canis (strain ATCC 23365 / NCTC 10854 / RM-666).